We begin with the raw amino-acid sequence, 1292 residues long: Zinc finger protein 423 (1292 aa).

Residues 1–11 (MSRRKQAKPRS) are compositionally biased toward basic residues. 3 disordered regions span residues 1 to 21 (MSRR…EASD), 33 to 70 (AGGL…EDVE), and 95 to 125 (AHRC…SPTQ). Basic and acidic residues predominate over residues 41–54 (ECDRKTSRALEDRN). Serine 55 and serine 58 each carry phosphoserine. The C2H2-type 1; degenerate zinc-finger motif lies at 75-101 (YTCDHCQQDFESLADLTDHRAHRCPGD). Residues 110–125 (WVASSPSSKDVASPTQ) are compositionally biased toward polar residues. 7 C2H2-type zinc fingers span residues 146-168 (YPCQ…EQIH), 174-196 (FKCT…IKLH), 202-224 (YHCH…LKTH), 230-252 (FKCS…MQAH), 271-294 (FMCD…LTLH), 303-326 (LQCI…HQAH), and 331-353 (HKCP…LDSH). Positions 354 to 407 (RQPDSSNHSVSPDPVLGSVASMSSATPDSSASVERGSTPDSTLKPLRGQKKMRD) are disordered. The span at 371–385 (SVASMSSATPDSSAS) shows a compositional bias: low complexity. The C2H2-type 9; degenerate zinc finger occupies 417–441 (YSCPYCSKRDFTSLAVLEIHLKTIH). C2H2-type zinc fingers lie at residues 449-472 (HTCQ…RKLH), 488-511 (FHCN…RVSH), and 525-548 (FFCN…QQAH). The C2H2-type 13; atypical zinc finger occupies 571–596 (YSCPYCTNSPIFGSILKLTKHIKENH). Positions 598–635 (NIPLAHSKKSKAEQSPVSSDVEVSSPKRQRLSGSANSI) are disordered. The residue at position 612 (serine 612) is a Phosphoserine. Residues 612-623 (SPVSSDVEVSSP) are compositionally biased toward low complexity. C2H2-type zinc fingers lie at residues 640 to 662 (YPCN…LKLH), 670 to 692 (QACP…LTVH), 700 to 723 (YVCE…LDMH), 728 to 751 (YHCT…AVKH), 758 to 781 (YRCT…KHSH), 789 to 811 (HKCI…ITTH), and 815 to 838 (YNCR…REKH). The C2H2-type 21; degenerate zinc finger occupies 894–916 (YGCDICGAAYTMEVLLQNHRLRD). 3 C2H2-type zinc fingers span residues 938–960 (HKCN…LQTH), 967–989 (YMCP…KVTH), and 1028–1050 (FRCV…GTFH). Serine 1062 carries the phosphoserine modification. Residues 1072-1090 (YKCALCLKEFRSKQDLVRL) form a C2H2-type 25; degenerate zinc finger. C2H2-type zinc fingers lie at residues 1128–1151 (LRCP…QVDH), 1176–1198 (YQCI…VANH), 1206–1228 (HECK…LIEH), 1237–1260 (FKCP…FAVH), and 1267–1290 (YDCS…MSQH). Residues 1144–1155 (ESHMQVDHRDLT) show a composition bias toward basic and acidic residues. Residues 1144–1171 (ESHMQVDHRDLTPETSGPRKGAQTSPVP) are disordered.

This sequence belongs to the krueppel C2H2-type zinc-finger protein family. In terms of assembly, homodimer. Interacts with SMAD1 and SMAD4. Interacts with EBF1. Interacts with PARP1. Interacts with CEP290. Within the cerebellum, Zfp423 is expressed in both ventricular and external germinal zones. Transiently expressed in newly differentiating olfactory-receptor neurons.

It localises to the nucleus. Its function is as follows. Transcription factor that can both act as an activator or a repressor depending on the context. Plays a central role in BMP signaling and olfactory neurogenesis. Associates with SMADs in response to BMP2 leading to activate transcription of BMP target genes. Acts as a transcriptional repressor via its interaction with EBF1, a transcription factor involved in terminal olfactory receptor neurons differentiation; this interaction preventing EBF1 to bind DNA and activate olfactory-specific genes. Involved in olfactory neurogenesis by participating in a developmental switch that regulates the transition from differentiation to maturation in olfactory receptor neurons. Controls proliferation and differentiation of neural precursors in cerebellar vermis formation. The chain is Zinc finger protein 423 (Znf423) from Mus musculus (Mouse).